Consider the following 150-residue polypeptide: Ribonuclease pancreatic delta-type (150 aa).

The first 25 residues, 1–25, serve as a signal peptide directing secretion; that stretch reads MGLEKSLILFSLLVLVLGWVQPSLG. R35 is a binding site for substrate. The active-site Proton acceptor is the H37. 4 disulfides stabilise this stretch: C51-C110, C65-C121, C83-C136, and C90-C98. Substrate contacts are provided by residues 66–70, K91, and R111; that span reads KRVNT. Catalysis depends on H145, which acts as the Proton donor.

The protein belongs to the pancreatic ribonuclease family. In terms of assembly, monomer.

The protein resides in the secreted. It carries out the reaction an [RNA] containing cytidine + H2O = an [RNA]-3'-cytidine-3'-phosphate + a 5'-hydroxy-ribonucleotide-3'-[RNA].. It catalyses the reaction an [RNA] containing uridine + H2O = an [RNA]-3'-uridine-3'-phosphate + a 5'-hydroxy-ribonucleotide-3'-[RNA].. Its function is as follows. Endonuclease that catalyzes the cleavage of RNA on the 3' side of pyrimidine nucleotides. Acts on single-stranded and double-stranded RNA. The protein is Ribonuclease pancreatic delta-type of Rattus exulans (Polynesian rat).